Here is a 385-residue protein sequence, read N- to C-terminus: Tryptophan--tRNA ligase (385 aa).

The 'HIGH' region signature appears at 82–90 (PSGPMHIGH). A 'KMSKS' region motif is present at residues 253–257 (KMSAS).

The protein belongs to the class-I aminoacyl-tRNA synthetase family.

The protein localises to the cytoplasm. The enzyme catalyses tRNA(Trp) + L-tryptophan + ATP = L-tryptophyl-tRNA(Trp) + AMP + diphosphate + H(+). This chain is Tryptophan--tRNA ligase, found in Pyrococcus abyssi (strain GE5 / Orsay).